Reading from the N-terminus, the 1035-residue chain is MGFFFSTRKGLLLIIFICLDIFGSNAQLLPEDEVQTLRTIFRKLQNQTVNIERTSCLDRKWNFVAESTSKLPTSNITCDCTFNASSVCRVTNIQLRGFNLRGIIPPEFGNLTRLTEIDLVLNFLSGTIPTTLSQIPLEILAVTGNRLSGPFPPQLGQITTLTDVIMESNLFTGQLPPNLGNLRSLKRLLISSNNITGRIPESLSNLKNLTNFRIDGNSLSGKIPDFIGNWTRLVRLDLQGTSMEGPIPASISNLKNLTELRITDLRGPTSPFPDLQNMTNMERLVLRNCLIREPIPEYIGTSMTMLKLLDLSSNMLNGTIPDTFRSLNAFNFMYLNNNSLTGPVPQFILDSKQNIDLSYNNFTQPPTLSCNQLDVNLISSYPSVTNNSVQWCLRKDLPCPGDAHHSSLFINCGGNRLKVDKDEYADDLNKRGASTFSSVSERWGYSSSGAWLGNDGATYLATDTFNLINESTPEYYKTARLASQSLKYYGLCMRRGSYKVQLYFAEIMFSNDQTYSSLGRRLFDIYVQGILLERDFNIAQRAGGVGKPFLRQVDEVQVNGSTLEIHLKWTGKGTNVIPTRGVYGPLISAITVTPNFKVDTGKPLSNGVVAGIVIAACVAFGLLVLVILRLTGYLGGKEVDENEELRGLDLQTGSFTLKQIKRATNNFDPENKIGEGGFGPVYKGVLADGMTIAVKQLSSKSKQGNREFVTEIGMISALQHPNLVKLYGCCIEGKELLLVYEYLENNSLARALFGTEKQRLHLDWSTRNKVCIGIAKGLAYLHEESRLKIVHRDIKATNVLLDLSLNAKISDFGLAKLDEEENTHISTRIAGTIGYMAPEYAMRGYLTDKADVYSFGVVCLEIVSGKSNTNYRPKEEFIYLLDWAYVLQEQGSLLELVDPDLGTSFSKKEAMRMLNIALLCTNPSPTLRPPMSSVVSMLQGKIKVQPPLVKREADPSGSAAMRFKALEHLSQDSESQVSTYTRNKEHKSSSSMDGPWVDSSFSDPSKDVSLLQQEEGNSSSSSRRLLDDLTDVEIE.

Residues M1–A26 form the signal peptide. Residues Q27–G607 are Extracellular-facing. N-linked (GlcNAc...) asparagine glycans are attached at residues N46, N75, N83, and N110. LRR repeat units lie at residues V87–N110, L111–I135, L137–I158, T160–L182, R183–L206, N208–R232, and V234–L254. 3 N-linked (GlcNAc...) asparagine glycosylation sites follow: N194, N208, and N229. N-linked (GlcNAc...) asparagine glycosylation is found at N256 and N277. LRR repeat units lie at residues M278 to S302, M303 to S326, N328 to L349, and D350 to Q372. 6 N-linked (GlcNAc...) asparagine glycosylation sites follow: N317, N337, N361, N386, N469, and N559. The chain crosses the membrane as a helical span at residues V608–L628. Topologically, residues R629–E1035 are cytoplasmic. T656 is modified (phosphothreonine). Residues F667 to L948 form the Protein kinase domain. ATP contacts are provided by residues I673 to V681 and K695. Y740 carries the post-translational modification Phosphotyrosine. Catalysis depends on D793, which acts as the Proton acceptor. S826 is subject to Phosphoserine. Residues T827 and T832 each carry the phosphothreonine modification. A Phosphotyrosine modification is found at Y840. Residues L969–E1035 are disordered. Residues D972–T981 are compositionally biased toward polar residues. Residues S1009–R1023 are compositionally biased toward low complexity.

It belongs to the protein kinase superfamily. Ser/Thr protein kinase family.

The protein localises to the cell membrane. It catalyses the reaction L-seryl-[protein] + ATP = O-phospho-L-seryl-[protein] + ADP + H(+). The enzyme catalyses L-threonyl-[protein] + ATP = O-phospho-L-threonyl-[protein] + ADP + H(+). This is Probable LRR receptor-like serine/threonine-protein kinase At1g53440 from Arabidopsis thaliana (Mouse-ear cress).